The chain runs to 140 residues: Lymphocyte antigen 6H (140 aa).

The first 25 residues, 1-25, serve as a signal peptide directing secretion; the sequence is MLPAAMKGLGLVLLAALLCSSPAHG. One can recognise a UPAR/Ly6 domain in the interval 26-91; it reads LWCQDCTLTT…RHFFSDYLMG (66 aa). 5 disulfide bridges follow: C28–C52, C31–C40, C45–C73, C77–C104, and C105–C110. N36 is a glycosylation site (N-linked (GlcNAc...) asparagine).

Its subcellular location is the cell membrane. The chain is Lymphocyte antigen 6H (LY6H) from Bos taurus (Bovine).